The sequence spans 83 residues: Small ribosomal subunit protein bS16 (83 aa).

It belongs to the bacterial ribosomal protein bS16 family.

The sequence is that of Small ribosomal subunit protein bS16 from Pseudoalteromonas atlantica (strain T6c / ATCC BAA-1087).